Here is a 366-residue protein sequence, read N- to C-terminus: Sodium-potassium/proton antiporter ChaA (366 aa).

The Cytoplasmic portion of the chain corresponds to methionine 1–serine 16. 2 consecutive transmembrane segments (helical) span residues leucine 17–proline 37 and valine 38–valine 58. Over arginine 59–serine 74 the chain is Cytoplasmic. A helical transmembrane segment spans residues leucine 75–threonine 95. Over glycine 96–threonine 106 the chain is Periplasmic. Residues leucine 107–glycine 127 form a helical membrane-spanning segment. Topologically, residues arginine 128–tyrosine 143 are cytoplasmic. The chain crosses the membrane as a helical span at residues leucine 144 to alanine 164. Over asparagine 165–serine 167 the chain is Periplasmic. The helical transmembrane segment at threonine 168–isoleucine 188 threads the bilayer. Topologically, residues glutamine 189–serine 216 are cytoplasmic. The helical transmembrane segment at alanine 217–valine 237 threads the bilayer. Residues threonine 238 to proline 255 lie on the Periplasmic side of the membrane. The chain crosses the membrane as a helical span at residues valine 256–leucine 276. Residues lysine 277–leucine 290 lie on the Cytoplasmic side of the membrane. The helical transmembrane segment at phenylalanine 291–phenylalanine 311 threads the bilayer. Over methionine 312–glutamine 318 the chain is Periplasmic. Residues phenylalanine 319–serine 339 form a helical membrane-spanning segment. Residues phenylalanine 340–threonine 345 lie on the Cytoplasmic side of the membrane. The chain crosses the membrane as a helical span at residues asparagine 346–alanine 366.

Belongs to the Ca(2+):cation antiporter (CaCA) (TC 2.A.19) family.

It is found in the cell inner membrane. The enzyme catalyses Na(+)(in) + H(+)(out) = Na(+)(out) + H(+)(in). The catalysed reaction is K(+)(in) + H(+)(out) = K(+)(out) + H(+)(in). It catalyses the reaction Ca(2+)(in) + H(+)(out) = Ca(2+)(out) + H(+)(in). Its activity is regulated as follows. Pronounced pH dependence with sodium as substrate. Ca(2+)/H(+) and Na(+)/H(+) antiporter activities are both inhibited by magnesium. Ca(2+)/H(+) activity is inhibited by the proton ionophore carbonyl cyanide m-chlorophenylhydrazone (CCCP). Functionally, sodium exporter that functions mainly at alkaline pH. Can also function as a potassium/proton and calcium/proton antiporter at alkaline pH. Does not play a major role in calcium export. The K(+)/H(+) antiporter activity may enable E.coli to adapt to K(+) salinity stress and to maintain K(+) homeostasis. The polypeptide is Sodium-potassium/proton antiporter ChaA (Escherichia coli (strain K12)).